A 379-amino-acid chain; its full sequence is Queuine tRNA-ribosyltransferase (379 aa).

The Proton acceptor role is filled by aspartate 94. Substrate is bound by residues 94–98 (DSGGF), aspartate 148, glutamine 191, and glycine 218. The interval 249 to 255 (GVGSPDA) is RNA binding. Catalysis depends on aspartate 268, which acts as the Nucleophile. Residues 273-277 (TRIAR) form an RNA binding; important for wobble base 34 recognition region. 4 residues coordinate Zn(2+): cysteine 306, cysteine 308, cysteine 311, and histidine 337.

The protein belongs to the queuine tRNA-ribosyltransferase family. Homodimer. Within each dimer, one monomer is responsible for RNA recognition and catalysis, while the other monomer binds to the replacement base PreQ1. Zn(2+) serves as cofactor.

It catalyses the reaction 7-aminomethyl-7-carbaguanine + guanosine(34) in tRNA = 7-aminomethyl-7-carbaguanosine(34) in tRNA + guanine. It functions in the pathway tRNA modification; tRNA-queuosine biosynthesis. Functionally, catalyzes the base-exchange of a guanine (G) residue with the queuine precursor 7-aminomethyl-7-deazaguanine (PreQ1) at position 34 (anticodon wobble position) in tRNAs with GU(N) anticodons (tRNA-Asp, -Asn, -His and -Tyr). Catalysis occurs through a double-displacement mechanism. The nucleophile active site attacks the C1' of nucleotide 34 to detach the guanine base from the RNA, forming a covalent enzyme-RNA intermediate. The proton acceptor active site deprotonates the incoming PreQ1, allowing a nucleophilic attack on the C1' of the ribose to form the product. After dissociation, two additional enzymatic reactions on the tRNA convert PreQ1 to queuine (Q), resulting in the hypermodified nucleoside queuosine (7-(((4,5-cis-dihydroxy-2-cyclopenten-1-yl)amino)methyl)-7-deazaguanosine). In Macrococcus caseolyticus (strain JCSC5402) (Macrococcoides caseolyticum), this protein is Queuine tRNA-ribosyltransferase.